The sequence spans 222 residues: MSAVVQREALLKKIDEALKSGKKRRFRQSVELIVVLRGIDLSKPENRINLLVELPHPPKLNKIAAFAHGAFETQAKNAGVDAVITRQEVEGLAGNKRAIRKLAKQYDFFIAPPDLMPLLGRVIGPIFGPRGKMPEVVPPNVDVKTVVERLRRVVRVRLRNEPVIKVRVGAEGQKPEEILTNILAVLEELNRKFPLRQYLRDIYIKKTMSPPVRIKPAEVLAR.

It belongs to the universal ribosomal protein uL1 family. Part of the 50S ribosomal subunit.

In terms of biological role, binds directly to 23S rRNA. Probably involved in E site tRNA release. Its function is as follows. Protein L1 is also a translational repressor protein, it controls the translation of its operon by binding to its mRNA. This is Large ribosomal subunit protein uL1 from Pyrobaculum calidifontis (strain DSM 21063 / JCM 11548 / VA1).